Here is a 188-residue protein sequence, read N- to C-terminus: Threonylcarbamoyl-AMP synthase (188 aa).

One can recognise a YrdC-like domain in the interval 8–188; that stretch reads EGAQPGLHAY…DLATGKILRA (181 aa).

This sequence belongs to the SUA5 family. TsaC subfamily.

It is found in the cytoplasm. The enzyme catalyses L-threonine + hydrogencarbonate + ATP = L-threonylcarbamoyladenylate + diphosphate + H2O. In terms of biological role, required for the formation of a threonylcarbamoyl group on adenosine at position 37 (t(6)A37) in tRNAs that read codons beginning with adenine. Catalyzes the conversion of L-threonine, HCO(3)(-)/CO(2) and ATP to give threonylcarbamoyl-AMP (TC-AMP) as the acyladenylate intermediate, with the release of diphosphate. The polypeptide is Threonylcarbamoyl-AMP synthase (Thiobacillus denitrificans (strain ATCC 25259 / T1)).